Reading from the N-terminus, the 546-residue chain is Coatomer subunit delta (546 aa).

Positions 190–440 (NRFMGSKDPN…VIFTIPVFPQ (251 aa)) are interaction with DSL1. The tract at residues 236–287 (PMATSQRAGHSATGGMKLGGGAGRRAGAAPRPSAISSASSGTPPPPEEDVPE) is disordered. Over residues 260–276 (RAGAAPRPSAISSASSG) the composition is skewed to low complexity. Thr277 is subject to Phosphothreonine. The MHD domain occupies 288–546 (NNGILISIKE…SLKSDEYLVQ (259 aa)).

This sequence belongs to the adaptor complexes medium subunit family. Delta-COP subfamily. Oligomeric complex that consists of at least the alpha, beta, beta', gamma, delta, epsilon and zeta subunits. Interacts with DSL1.

The protein resides in the cytoplasm. It localises to the golgi apparatus membrane. It is found in the cytoplasmic vesicle. Its subcellular location is the COPI-coated vesicle membrane. The coatomer is a cytosolic protein complex that binds to dilysine motifs and reversibly associates with Golgi non-clathrin-coated vesicles, which further mediate biosynthetic protein transport from the ER, via the Golgi up to the trans Golgi network. Coatomer complex is required for budding from Golgi membranes, and is essential for the retrograde Golgi-to-ER transport of dilysine-tagged proteins. The polypeptide is Coatomer subunit delta (RET2) (Saccharomyces cerevisiae (strain ATCC 204508 / S288c) (Baker's yeast)).